A 149-amino-acid chain; its full sequence is MSNTLSFKTYSAKPGEVVRKWYIVDAEGKVLGRLASEIAKVLRGKHKAQFTPHIDTGDFVIVTNAEKIGLSGKKMDQKTYFSHSNYPGGVRIDNVKDVLQKKPEQVIEKAVWGMLPHNNLGRQLFKKLKVYKGTEHPHAAQCPVEMNVN.

It belongs to the universal ribosomal protein uL13 family. Part of the 50S ribosomal subunit.

In terms of biological role, this protein is one of the early assembly proteins of the 50S ribosomal subunit, although it is not seen to bind rRNA by itself. It is important during the early stages of 50S assembly. The protein is Large ribosomal subunit protein uL13 of Prosthecochloris aestuarii (strain DSM 271 / SK 413).